The primary structure comprises 139 residues: Protein cornichon homolog 4 (139 aa).

A run of 3 helical transmembrane segments spans residues 5–25 (VFVFSLLDCCALIFLSVYFII), 57–77 (LVTVLMLISLHWFIFLLNLPV), and 118–138 (LGFHLLCFFMYLYSMILALIN).

This sequence belongs to the cornichon family. In terms of assembly, interacts with Sec23/24 complex components SEC24B and SEC24D. Interacts with CCR5. Interacts with ADRB2 in the early secretory pathway.

It localises to the membrane. Its subcellular location is the endoplasmic reticulum. The protein localises to the endoplasmic reticulum-Golgi intermediate compartment. Functionally, involved in G protein-coupled receptors (GPCRs) trafficking from the endoplasmic reticulum to the cell surface; it promotes the exit of GPCRs from the early secretory pathway, likely through interaction with the COPII machinery. This chain is Protein cornichon homolog 4 (CNIH4), found in Bos taurus (Bovine).